A 273-amino-acid polypeptide reads, in one-letter code: S-adenosylmethionine decarboxylase proenzyme (273 aa).

The active-site Schiff-base intermediate with substrate; via pyruvic acid is the S118. A Pyruvic acid (Ser); by autocatalysis modification is found at S118. Catalysis depends on H123, which acts as the Proton acceptor; for processing activity. The active-site Proton donor; for catalytic activity is the C146.

It belongs to the prokaryotic AdoMetDC family. Type 2 subfamily. In terms of assembly, heterooctamer of four alpha and four beta chains arranged as a tetramer of alpha/beta heterodimers. It depends on pyruvate as a cofactor. Post-translationally, is synthesized initially as an inactive proenzyme. Formation of the active enzyme involves a self-maturation process in which the active site pyruvoyl group is generated from an internal serine residue via an autocatalytic post-translational modification. Two non-identical subunits are generated from the proenzyme in this reaction, and the pyruvate is formed at the N-terminus of the alpha chain, which is derived from the carboxyl end of the proenzyme. The post-translation cleavage follows an unusual pathway, termed non-hydrolytic serinolysis, in which the side chain hydroxyl group of the serine supplies its oxygen atom to form the C-terminus of the beta chain, while the remainder of the serine residue undergoes an oxidative deamination to produce ammonia and the pyruvoyl group blocking the N-terminus of the alpha chain.

The catalysed reaction is S-adenosyl-L-methionine + H(+) = S-adenosyl 3-(methylsulfanyl)propylamine + CO2. Its pathway is amine and polyamine biosynthesis; S-adenosylmethioninamine biosynthesis; S-adenosylmethioninamine from S-adenosyl-L-methionine: step 1/1. Its function is as follows. Catalyzes the decarboxylation of S-adenosylmethionine to S-adenosylmethioninamine (dcAdoMet), the propylamine donor required for the synthesis of the polyamines spermine and spermidine from the diamine putrescine. The sequence is that of S-adenosylmethionine decarboxylase proenzyme from Alkalilimnicola ehrlichii (strain ATCC BAA-1101 / DSM 17681 / MLHE-1).